The following is a 367-amino-acid chain: Methylthioribose-1-phosphate isomerase (367 aa).

Residues 48 to 50 (RGA), arginine 91, and glutamine 215 each bind substrate. Catalysis depends on aspartate 256, which acts as the Proton donor. 266–267 (NK) is a substrate binding site.

It belongs to the eIF-2B alpha/beta/delta subunits family. MtnA subfamily.

The catalysed reaction is 5-(methylsulfanyl)-alpha-D-ribose 1-phosphate = 5-(methylsulfanyl)-D-ribulose 1-phosphate. It participates in amino-acid biosynthesis; L-methionine biosynthesis via salvage pathway; L-methionine from S-methyl-5-thio-alpha-D-ribose 1-phosphate: step 1/6. Catalyzes the interconversion of methylthioribose-1-phosphate (MTR-1-P) into methylthioribulose-1-phosphate (MTRu-1-P). The protein is Methylthioribose-1-phosphate isomerase of Syntrophus aciditrophicus (strain SB).